Reading from the N-terminus, the 341-residue chain is MVREEVAGSTQTLQWKCVESRVDSKRLYYGRFILSPLRKGQADTVGIALRRALLGEIEGTCIARAKFGSVPHEYSTIAGIEESVQEILLNLKEIVLRSNLYGVRDASICVKGPRYITAQDIILPPSVEIVDTSQPIANLTEPIDFCIELQIKRDRGYQTELRKNYQDGSYPIDAVSMPVRNVNYSIFSCGNGNEKHEILFLEIWTNGSLTPKEALYEASRNLIDLFLPFLHAEEEGTSFEENKNRFTPPLFTFQKRLTNLNLKKNKKGIPLNCIFIDQLELPSRTYNCLKRANIHTLLDLLSKTEEDLMRIDSFHMEDGKQIWDTLEKYLPIDLLKNKLSF.

An alpha N-terminal domain (alpha-NTD) region spans residues 1-233; sequence MVREEVAGST…DLFLPFLHAE (233 aa). An alpha C-terminal domain (alpha-CTD) region spans residues 269–341; sequence IPLNCIFIDQ…IDLLKNKLSF (73 aa).

Belongs to the RNA polymerase alpha chain family. In terms of assembly, in plastids the minimal PEP RNA polymerase catalytic core is composed of four subunits: alpha, beta, beta', and beta''. When a (nuclear-encoded) sigma factor is associated with the core the holoenzyme is formed, which can initiate transcription.

The protein resides in the plastid. The protein localises to the chloroplast. The enzyme catalyses RNA(n) + a ribonucleoside 5'-triphosphate = RNA(n+1) + diphosphate. In terms of biological role, DNA-dependent RNA polymerase catalyzes the transcription of DNA into RNA using the four ribonucleoside triphosphates as substrates. This chain is DNA-directed RNA polymerase subunit alpha, found in Lolium perenne (Perennial ryegrass).